Reading from the N-terminus, the 112-residue chain is Ribonuclease P protein component (112 aa).

The protein belongs to the RnpA family. As to quaternary structure, consists of a catalytic RNA component (M1 or rnpB) and a protein subunit.

It carries out the reaction Endonucleolytic cleavage of RNA, removing 5'-extranucleotides from tRNA precursor.. Functionally, RNaseP catalyzes the removal of the 5'-leader sequence from pre-tRNA to produce the mature 5'-terminus. It can also cleave other RNA substrates such as 4.5S RNA. The protein component plays an auxiliary but essential role in vivo by binding to the 5'-leader sequence and broadening the substrate specificity of the ribozyme. The sequence is that of Ribonuclease P protein component from Mesomycoplasma hyopneumoniae (strain 7448) (Mycoplasma hyopneumoniae).